Consider the following 282-residue polypeptide: Transcription repressor OFP18 (282 aa).

The segment at Met-1 to Ala-85 is disordered. Over residues Ser-15–Ser-35 the composition is skewed to low complexity. The segment covering His-36–Ala-47 has biased composition (polar residues). Residues Ser-66 to Ala-85 show a composition bias toward low complexity. Residues Leu-139 to Asn-199 form the OVATE domain.

In terms of tissue distribution, expressed in roots and shoots.

Its subcellular location is the nucleus. Its function is as follows. Transcriptional repressor that regulates multiple aspects of plant growth and development through the regulation of BEL1-LIKE (BLH) and KNOX TALE (KNAT) homeodomain transcription factors. This is Transcription repressor OFP18 (OFP18) from Arabidopsis thaliana (Mouse-ear cress).